The following is a 448-amino-acid chain: Tubulin beta chain (448 aa).

GTP is bound by residues glutamine 11, glutamate 69, serine 138, glycine 142, threonine 143, glycine 144, asparagine 204, and asparagine 226. Glutamate 69 serves as a coordination point for Mg(2+). Residues 425–448 are disordered; that stretch reads YQDAGVDEEEEEYDEEAPVEEPLE. Residues 429–448 are compositionally biased toward acidic residues; it reads GVDEEEEEYDEEAPVEEPLE.

The protein belongs to the tubulin family. As to quaternary structure, dimer of alpha and beta chains. A typical microtubule is a hollow water-filled tube with an outer diameter of 25 nm and an inner diameter of 15 nM. Alpha-beta heterodimers associate head-to-tail to form protofilaments running lengthwise along the microtubule wall with the beta-tubulin subunit facing the microtubule plus end conferring a structural polarity. Microtubules usually have 13 protofilaments but different protofilament numbers can be found in some organisms and specialized cells. The cofactor is Mg(2+).

It localises to the cytoplasm. The protein resides in the cytoskeleton. Functionally, tubulin is the major constituent of microtubules, a cylinder consisting of laterally associated linear protofilaments composed of alpha- and beta-tubulin heterodimers. Microtubules grow by the addition of GTP-tubulin dimers to the microtubule end, where a stabilizing cap forms. Below the cap, tubulin dimers are in GDP-bound state, owing to GTPase activity of alpha-tubulin. The protein is Tubulin beta chain of Metarhizium anisopliae (Entomophthora anisopliae).